Consider the following 205-residue polypeptide: MAPDTPSQPASRRDELLQLAATMFADRGLKATTVRDIADSAGILSGSLYHHFKSKEQMVEEVLRDFLDWLFGRYQQILDTATSPLEKLTGLFMASFEAIEHRHAQVVIYQDEAKRLSDLPQFDFVETRNKEQRKMWVDILQEGVADGSFRPDLDVDLVYRFIRDTTWVSVRWYKPGGPLSAEQVGQQYLAIVLGGITQSQGDKHA.

Residues 10–70 form the HTH tetR-type domain; the sequence is ASRRDELLQL…EVLRDFLDWL (61 aa). The H-T-H motif DNA-binding region spans 33 to 52; the sequence is TVRDIADSAGILSGSLYHHF.

As to quaternary structure, homodimer.

Controls the expression of a small regulon that may play a role in the utilization of cholesterol. This Mycolicibacterium smegmatis (strain ATCC 700084 / mc(2)155) (Mycobacterium smegmatis) protein is HTH-type transcriptional repressor KstR2 (kstR2).